The chain runs to 413 residues: Arginine biosynthesis bifunctional protein ArgJ (413 aa).

The substrate site is built by T154, K180, T191, E277, N408, and T413. T191 serves as the catalytic Nucleophile.

The protein belongs to the ArgJ family. As to quaternary structure, heterotetramer of two alpha and two beta chains.

Its subcellular location is the cytoplasm. The enzyme catalyses N(2)-acetyl-L-ornithine + L-glutamate = N-acetyl-L-glutamate + L-ornithine. The catalysed reaction is L-glutamate + acetyl-CoA = N-acetyl-L-glutamate + CoA + H(+). The protein operates within amino-acid biosynthesis; L-arginine biosynthesis; L-ornithine and N-acetyl-L-glutamate from L-glutamate and N(2)-acetyl-L-ornithine (cyclic): step 1/1. It functions in the pathway amino-acid biosynthesis; L-arginine biosynthesis; N(2)-acetyl-L-ornithine from L-glutamate: step 1/4. In terms of biological role, catalyzes two activities which are involved in the cyclic version of arginine biosynthesis: the synthesis of N-acetylglutamate from glutamate and acetyl-CoA as the acetyl donor, and of ornithine by transacetylation between N(2)-acetylornithine and glutamate. This Synechocystis sp. (strain ATCC 27184 / PCC 6803 / Kazusa) protein is Arginine biosynthesis bifunctional protein ArgJ.